A 254-amino-acid polypeptide reads, in one-letter code: Probable triosephosphate isomerase 2 (254 aa).

9 to 11 contributes to the substrate binding site; the sequence is NMK. His96 functions as the Electrophile in the catalytic mechanism. Glu168 functions as the Proton acceptor in the catalytic mechanism. Residues Gly174 and Ser212 each coordinate substrate.

The protein belongs to the triosephosphate isomerase family. In terms of assembly, homodimer.

It localises to the cytoplasm. The catalysed reaction is D-glyceraldehyde 3-phosphate = dihydroxyacetone phosphate. It participates in carbohydrate biosynthesis; gluconeogenesis. Its pathway is carbohydrate degradation; glycolysis; D-glyceraldehyde 3-phosphate from glycerone phosphate: step 1/1. Its function is as follows. Involved in the gluconeogenesis. Catalyzes stereospecifically the conversion of dihydroxyacetone phosphate (DHAP) to D-glyceraldehyde-3-phosphate (G3P). In Listeria monocytogenes serovar 1/2a (strain ATCC BAA-679 / EGD-e), this protein is Probable triosephosphate isomerase 2.